Here is a 317-residue protein sequence, read N- to C-terminus: Sperm acrosome membrane-associated protein 6 (317 aa).

A signal peptide spans 1 to 18; it reads MFVFIAKLLIFSSVITSA. At 19–281 the chain is on the extracellular side; that stretch reads FTCYQCFIDE…PSFSFWLPRP (263 aa). 5 disulfide bridges follow: cysteine 21-cysteine 143, cysteine 24-cysteine 146, cysteine 35-cysteine 51, cysteine 128-cysteine 151, and cysteine 132-cysteine 157. Residue asparagine 29 is glycosylated (N-linked (GlcNAc...) asparagine). The 115-residue stretch at 123-237 folds into the Ig-like domain; that stretch reads PRVSGCLPPC…EVLSQEQSLV (115 aa). Asparagine 168 is a glycosylation site (N-linked (GlcNAc...) asparagine). Cysteine 174 and cysteine 227 are disulfide-bonded. Residues 282–302 traverse the membrane as a helical segment; sequence ALLITCLTATMLLIFLSLGAM. The Cytoplasmic portion of the chain corresponds to 303-317; the sequence is CRLWYQIRTNVSNPA.

The protein belongs to the SPACA6 family. Forms a complex with izumo1 and tmem81 on spermatocyte cell membrane. The complex binds to oocyte protein bncr. In terms of tissue distribution, expressed in testis.

The protein localises to the cytoplasmic vesicle. It localises to the secretory vesicle. Its subcellular location is the acrosome membrane. In terms of biological role, sperm protein required for fusion of sperm with the egg membrane during fertilization. May regulate the expression of sperm surface protein DCST2. The sequence is that of Sperm acrosome membrane-associated protein 6 from Danio rerio (Zebrafish).